We begin with the raw amino-acid sequence, 158 residues long: Small ribosomal subunit protein uS17 (158 aa).

Position 2 is an N-acetylalanine (alanine 2). Arginine 22 carries the post-translational modification Citrulline. Lysine 38, lysine 45, and lysine 58 each carry N6-acetyllysine. The S-palmitoyl cysteine moiety is linked to residue cysteine 60. Serine 67 is modified (phosphoserine). An Omega-N-methylarginine modification is found at arginine 69. Residue serine 110 is modified to Phosphoserine.

It belongs to the universal ribosomal protein uS17 family. As to quaternary structure, component of the small ribosomal subunit. Part of the small subunit (SSU) processome, composed of more than 70 proteins and the RNA chaperone small nucleolar RNA (snoRNA) U3. Citrullinated by PADI4.

Its subcellular location is the cytoplasm. It localises to the nucleus. The protein localises to the nucleolus. In terms of biological role, component of the small ribosomal subunit. The ribosome is a large ribonucleoprotein complex responsible for the synthesis of proteins in the cell. Part of the small subunit (SSU) processome, first precursor of the small eukaryotic ribosomal subunit. During the assembly of the SSU processome in the nucleolus, many ribosome biogenesis factors, an RNA chaperone and ribosomal proteins associate with the nascent pre-rRNA and work in concert to generate RNA folding, modifications, rearrangements and cleavage as well as targeted degradation of pre-ribosomal RNA by the RNA exosome. The sequence is that of Small ribosomal subunit protein uS17 (RPS11) from Canis lupus familiaris (Dog).